The following is a 196-amino-acid chain: CMRF35-like molecule 2 (196 aa).

Residues 1–17 (MRLCAGLLLLCFQGCLS) form the signal peptide. The Ig-like V-type domain maps to 18 to 122 (LTGPGSVSGY…DSWSRDPSVS (105 aa)). Topologically, residues 18-171 (LTGPGSVSGY…QLWSLLSSIQ (154 aa)) are extracellular. Cysteine 36 and cysteine 104 are oxidised to a cystine. Asparagine 84 carries N-linked (GlcNAc...) asparagine glycosylation. Residues 172–192 (FQVLVFLKLPLFLSMLCAIFW) traverse the membrane as a helical segment. The Cytoplasmic portion of the chain corresponds to 193 to 196 (VNRL).

This sequence belongs to the CD300 family. Interacts with TYROBP.

It localises to the cell membrane. Functionally, probably acts as an activating receptor. The polypeptide is CMRF35-like molecule 2 (Cd300e) (Mus musculus (Mouse)).